The sequence spans 66 residues: Phylloseptin-H8 (66 aa).

The signal sequence occupies residues 1–22 (MAFLKKSLFLVLFLGLVSLSIC). Residues 23–44 (EEEKRETEEEENDQEEDDKSEE) constitute a propeptide that is removed on maturation. The interval 25–44 (EKRETEEEENDQEEDDKSEE) is disordered. Positions 30–41 (EEEENDQEEDDK) are enriched in acidic residues. Leu65 bears the Leucine amide mark.

In terms of tissue distribution, expressed by the skin glands.

The protein resides in the secreted. Has antimicrobial activity. The chain is Phylloseptin-H8 from Pithecopus hypochondrialis (Orange-legged leaf frog).